Here is a 144-residue protein sequence, read N- to C-terminus: Large ribosomal subunit protein uL22 (144 aa).

The segment at 123–144 (ELVKKRTMGHKKEKAKQKQKQQ) is disordered. The span at 125–144 (VKKRTMGHKKEKAKQKQKQQ) shows a compositional bias: basic residues.

This sequence belongs to the universal ribosomal protein uL22 family. In terms of assembly, part of the 50S ribosomal subunit.

Its function is as follows. This protein binds specifically to 23S rRNA; its binding is stimulated by other ribosomal proteins, e.g. L4, L17, and L20. It is important during the early stages of 50S assembly. It makes multiple contacts with different domains of the 23S rRNA in the assembled 50S subunit and ribosome. In terms of biological role, the globular domain of the protein is located near the polypeptide exit tunnel on the outside of the subunit, while an extended beta-hairpin is found that lines the wall of the exit tunnel in the center of the 70S ribosome. This chain is Large ribosomal subunit protein uL22, found in Mycoplasma genitalium (strain ATCC 33530 / DSM 19775 / NCTC 10195 / G37) (Mycoplasmoides genitalium).